Reading from the N-terminus, the 792-residue chain is DNA ligase (792 aa).

NAD(+) is bound by residues 42-46 (DAEYD), 91-92 (SL), and glutamate 124. Residue lysine 126 is the N6-AMP-lysine intermediate of the active site. Residues arginine 147, glutamate 189, lysine 306, and lysine 330 each coordinate NAD(+). Residues cysteine 424, cysteine 426, cysteine 448, and cysteine 454 each contribute to the Zn(2+) site. In terms of domain architecture, BRCT spans 714–792 (KTDTAVAGKT…EDEWLAMVGG (79 aa)).

The protein belongs to the NAD-dependent DNA ligase family. LigA subfamily. It depends on Mg(2+) as a cofactor. Mn(2+) is required as a cofactor.

It carries out the reaction NAD(+) + (deoxyribonucleotide)n-3'-hydroxyl + 5'-phospho-(deoxyribonucleotide)m = (deoxyribonucleotide)n+m + AMP + beta-nicotinamide D-nucleotide.. In terms of biological role, DNA ligase that catalyzes the formation of phosphodiester linkages between 5'-phosphoryl and 3'-hydroxyl groups in double-stranded DNA using NAD as a coenzyme and as the energy source for the reaction. It is essential for DNA replication and repair of damaged DNA. This Caulobacter sp. (strain K31) protein is DNA ligase.